The following is a 206-amino-acid chain: MDEDVLTTLKILIIGESGVGKSSLLLRFTDDTFDPELAATIGVDFKVKTISVDGNKAKLAIWDTAGQERFRTLTPSYYRGAQGVILVYDVTRRDTFVKLDNWLNELETYCTRNDIVNMLVGNKIDKENREVDRNEGLKFARKHSMLFIEASAKTCDGVQCAFEELVEKIIQTPGLWESENQNKGVKLSHREEGQGGGACGGYCSVL.

M1 is modified (N-acetylmethionine). S17, G20, K21, S22, S23, D34, P35, T40, G66, K123, and D125 together coordinate GTP. Residue S22 coordinates Mg(2+). 2 consecutive short sequence motifs (switch) follow at residues 31–45 and 63–80; these read DTFDPELAATIGVDF and DTAGQERFRTLTPSYYRG. T40 lines the Mg(2+) pocket. S144 is modified (phosphoserine). GTP is bound at residue A152. C199 carries the S-palmitoyl cysteine lipid modification. C203 is subject to Cysteine methyl ester. The S-geranylgeranyl cysteine moiety is linked to residue C203. A propeptide spans 204-206 (removed in mature form); the sequence is SVL.

Belongs to the small GTPase superfamily. Rab family. As to quaternary structure, interacts (in GTP-bound form) with ZFYVE1. Interacts with ZW10 and this interaction is enhanced in the presence of ZFYVE1. Interacts with BSCL2. (Microbial infection) Interacts with Hepatitis C virus (HCV) non-structural protein 5A; this interaction may promote the association of NS5A and other viral replicase components with lipid droplets. Mg(2+) serves as cofactor. Ubiquitous.

Its subcellular location is the endoplasmic reticulum membrane. It is found in the golgi apparatus. The protein localises to the cis-Golgi network membrane. The protein resides in the lipid droplet. It localises to the apical cell membrane. The catalysed reaction is GTP + H2O = GDP + phosphate + H(+). Regulated by guanine nucleotide exchange factor (GEF) RAB3GAP1-RAB3GAP2 complex at the cis-Golgi membrane which promotes the exchange of bound GDP for free GTP. Regulated by GTPase activating protein (GAP) TBC1D20 at the ER membrane which increases the GTP hydrolysis activity. Inhibited by GDP dissociation inhibitors (GDIs) which prevent Rab-GDP dissociation. In terms of biological role, the small GTPases Rab are key regulators of intracellular membrane trafficking, from the formation of transport vesicles to their fusion with membranes. Rabs cycle between an inactive GDP-bound form and an active GTP-bound form that is able to recruit to membranes different sets of downstream effectors directly responsible for vesicle formation, movement, tethering and fusion. RAB18 is required for the localization of ZFYVE1 to lipid droplets and for its function in mediating the formation of endoplasmic reticulum-lipid droplets (ER-LD) contacts. Also required for maintaining endoplasmic reticulum structure. Plays a role in apical endocytosis/recycling. Plays a key role in eye and brain development and neurodegeneration. The polypeptide is Ras-related protein Rab-18 (Homo sapiens (Human)).